We begin with the raw amino-acid sequence, 250 residues long: DNA repair protein RecO (250 aa).

It belongs to the RecO family.

Its function is as follows. Involved in DNA repair and RecF pathway recombination. This Staphylococcus aureus (strain bovine RF122 / ET3-1) protein is DNA repair protein RecO.